A 480-amino-acid polypeptide reads, in one-letter code: UDP-N-acetylmuramoylalanine--D-glutamate ligase (480 aa).

ATP is bound at residue 120–126 (GTNGKTT).

The protein belongs to the MurCDEF family.

Its subcellular location is the cytoplasm. The catalysed reaction is UDP-N-acetyl-alpha-D-muramoyl-L-alanine + D-glutamate + ATP = UDP-N-acetyl-alpha-D-muramoyl-L-alanyl-D-glutamate + ADP + phosphate + H(+). It participates in cell wall biogenesis; peptidoglycan biosynthesis. Cell wall formation. Catalyzes the addition of glutamate to the nucleotide precursor UDP-N-acetylmuramoyl-L-alanine (UMA). This is UDP-N-acetylmuramoylalanine--D-glutamate ligase from Nocardia farcinica (strain IFM 10152).